The chain runs to 566 residues: F-box/WD repeat-containing protein 5 (566 aa).

The F-box domain maps to 3 to 49 (EGGTPLLPDSLVYQIFLSLGPADVLAAGLVCRQWQAVSRDEFLWREQ). 4 WD repeats span residues 83–125 (VEVQ…DLTI), 126–178 (SLLH…LDSF), 179–238 (ALLS…VKRL), and 239–281 (FKIQ…RIFD). S151 is subject to Phosphoserine; by PLK4. S284 bears the Phosphoserine mark. The D-box signature appears at 303–311 (RHFLDRVLE). 3 WD repeats span residues 394 to 447 (ALDH…DLLV), 458 to 501 (RALR…RHYN), and 502 to 539 (ICLARLRHEDVVNSVVFSPQEQELLLTASDDATIKAWR).

This sequence belongs to the FBXW5 family. As to quaternary structure, part of the SCF (SKP1-CUL1-F-box) E3 ubiquitin-protein ligase complex SCF(FBXW5) composed of CUL1, SKP1, RBX1 and FBXW5. Component of the DCX(FBXW5) E3 ubiquitin ligase complex, at least composed of (CUL4A or CUL4B), DDB1, FBXW5 and RBX1. Interacts with CDC20, EPS8, TSC1, TSC2 and SASS6. Interacts with TNFAIP8L1; TNFAIP8L1 competes with TSC2 to bind FBXW5 increasing TSC2 stability by preventing its ubiquitination. In terms of processing, phosphorylated at Ser-151 by PLK4 during the G1/S transition, leading to inhibit its ability to ubiquitinate SASS6. Ubiquitinated and degraded by the APC/C complex during mitosis and G1 phase.

The protein localises to the cytoplasm. The protein operates within protein modification; protein ubiquitination. Functionally, substrate recognition component of both SCF (SKP1-CUL1-F-box protein) and DCX (DDB1-CUL4-X-box) E3 ubiquitin-protein ligase complexes. Substrate recognition component of the SCF(FBXW5) E3 ubiquitin-protein ligase complex which mediates the ubiquitination and subsequent proteasomal degradation of SASS6 during S phase, leading to prevent centriole reduplication. The SCF(FBXW5) complex also mediates ubiquitination and degradation of actin-regulator EPS8 during G2 phase, leading to the transient degradation of EPS8 and subsequent cell shape changes required to allow mitotic progression. Substrate-specific adapter of the DCX(FBXW5) E3 ubiquitin-protein ligase complex which mediates the polyubiquitination and subsequent degradation of TSC2. May also act as a negative regulator of MAP3K7/TAK1 signaling in the interleukin-1B (IL1B) signaling pathway. This is F-box/WD repeat-containing protein 5 (FBXW5) from Homo sapiens (Human).